Consider the following 1512-residue polypeptide: DNA (cytosine-5)-methyltransferase 2 (1512 aa).

Residues Met1 to Glu22 show a composition bias toward basic and acidic residues. Disordered regions lie at residues Met1 to Lys35 and Ala634 to Glu678. The span at Val638–Val662 shows a compositional bias: acidic residues. BAH domains are found at residues Glu707–Pro841 and Thr909–Pro1026. Residues Leu1071 to Lys1505 form the SAM-dependent MTase C5-type domain. Cys1176 is an active-site residue.

Belongs to the class I-like SAM-binding methyltransferase superfamily. C5-methyltransferase family. As to expression, expressed at low levels in vegetative and floral organs.

The protein resides in the nucleus. The catalysed reaction is a 2'-deoxycytidine in DNA + S-adenosyl-L-methionine = a 5-methyl-2'-deoxycytidine in DNA + S-adenosyl-L-homocysteine + H(+). Maintains chromatin CpG methylation that plays a role in genomic imprinting, regulation of embryogenesis and seed viability. Required for proper patterns of CG DNA methylation in dividing cells. This Arabidopsis thaliana (Mouse-ear cress) protein is DNA (cytosine-5)-methyltransferase 2 (MET2).